Reading from the N-terminus, the 704-residue chain is MAQDVLTDLNKVRNIGIMAHIDAGKTTTTERILYYTGITHKIGEVHDGAATMDWMAQEQERGITITSAATTCFWNKNQINIIDTPGHVDFTVEVERSLRVLDGAVAVFDGKEGVEPQSETVWRQADKYDVPRICFVNKMDKLGADFYFTVDTIVNRLGAKPLVIQLPIGAEGGFEGVIDLVEMRALTWRGDSKGDVELGAKYDIEEIPADLKDKADEYRAKLLETVAETDDALLEKYFGGEELTVAEIKAAIRKLTVNSEIYPVLCGSAFKNRGVQPMLDAVIDYLPSPLDVPPMEGHDVRDEEKIIIRKPDSTEPFSALAFKVAVHPFFGRLTYVRVYSGHIASGSQVINSTKGKKERIGKIFQMHSNKENPVDSVTAGHIYAVIGLKDTTTGDTLCDPQDQIVLESMTFPEPVIEVAIEPKTKADQEKLGVAIQKLAEEDPTFRTEQNQETGQTVIKGMGELHLDILVDRMKREFNVEANVGKPQVAYRETIRGTVDKHDFTHKKQTGGSGQFAKIQIKIEPMEVTAEKTYEFDNKVTGGRVPREYIPSVDAGIQDALQVGILAGYPMVGVKATLLDGAAHDVDSSEMAFKIAGSMAFKEAARKAKPVLLEPLMAVEVRTPEEYMGDVIGDLNSRRGQIQAMEDASGVKVITANVPLSEMFGYVGDLRSKTSGRAVYSMSFGSYAEVPKAVADEIVQKNKGE.

The region spanning 10-290 (NKVRNIGIMA…AVIDYLPSPL (281 aa)) is the tr-type G domain. Residues 19-26 (AHIDAGKT), 83-87 (DTPGH), and 137-140 (NKMD) each bind GTP.

Belongs to the TRAFAC class translation factor GTPase superfamily. Classic translation factor GTPase family. EF-G/EF-2 subfamily.

It is found in the cytoplasm. Its function is as follows. Catalyzes the GTP-dependent ribosomal translocation step during translation elongation. During this step, the ribosome changes from the pre-translocational (PRE) to the post-translocational (POST) state as the newly formed A-site-bound peptidyl-tRNA and P-site-bound deacylated tRNA move to the P and E sites, respectively. Catalyzes the coordinated movement of the two tRNA molecules, the mRNA and conformational changes in the ribosome. In Clavibacter sepedonicus (Clavibacter michiganensis subsp. sepedonicus), this protein is Elongation factor G.